The chain runs to 243 residues: Ribosomal RNA small subunit methyltransferase G (243 aa).

S-adenosyl-L-methionine contacts are provided by residues Gly-80, Phe-85, 132 to 133 (IE), and Arg-151.

This sequence belongs to the methyltransferase superfamily. RNA methyltransferase RsmG family.

Its subcellular location is the cytoplasm. Functionally, specifically methylates the N7 position of a guanine in 16S rRNA. This Synechococcus sp. (strain CC9902) protein is Ribosomal RNA small subunit methyltransferase G.